The primary structure comprises 134 residues: PEDKEQAQQIQHEDLLSLVLKVLRSWNDPLLHMVSEVQDIQEAPDTILWKAVEIEEQTKRLLEGMERIVGRIHPGDLENEIYSPWPGPSAAIPGDESSRLFAFYNLLHCLRRDSHKIDNYLKLLKCRLIHDGNC.

An intrachain disulfide couples cysteine 126 to cysteine 134.

It belongs to the somatotropin/prolactin family.

The protein resides in the secreted. The protein is Prolactin of Bufo japonicus (Japanese common toad).